A 1372-amino-acid chain; its full sequence is uncharacterized protein (1372 aa).

A disordered region spans residues 1-67 (MEATDQEVML…PPAPSKNPMQ (67 aa)). A compositionally biased stretch (polar residues) spans 17–28 (MSTSATSSTNGG). The stretch at 75–143 (NLYQTAQEQL…LEEHDRLRRK (69 aa)) forms a coiled coil. Disordered regions lie at residues 178-199 (NDLS…LSGD), 238-287 (HINR…QASS), 380-414 (EVSN…EVRR), 427-447 (QSLE…VPVP), and 486-531 (EERM…DSGI). 2 stretches are compositionally biased toward low complexity: residues 184–198 (GIGT…SLSG) and 238–251 (HINR…HGNG). Polar residues-rich tracts occupy residues 257-287 (TGPS…QASS) and 399-408 (TNGNSATTAP). Residues 409–438 (KSEVRRLSGDISSIRDRMQSLEQQRKAFSS) are a coiled coil. Over residues 486-499 (EERMRQQQQKEKHS) the composition is skewed to basic and acidic residues. Residues 514-523 (ALIIEEPPVA) are compositionally biased toward low complexity. The stretch at 539 to 580 (LQQQQQLNAAIAALALEERQLEEAANAVNQIEAEFDELTDLH) forms a coiled coil. The segment covering 652–673 (VSKSGPTPNPTSTPNMVSSSPN) has biased composition (low complexity). Disordered stretches follow at residues 652–679 (VSKS…LRRK), 799–820 (SRQL…RSEH), 860–897 (SQSD…PKRV), 1151–1181 (SSQM…PIPK), and 1231–1250 (SPPS…SPTK). Polar residues-rich tracts occupy residues 860–871 (SQSDSKSLTSPI) and 1151–1160 (SSQMMKTSLP).

This is an uncharacterized protein from Drosophila melanogaster (Fruit fly).